Consider the following 187-residue polypeptide: Ion-translocating oxidoreductase complex subunit B (187 aa).

Residues 1–26 form a hydrophobic region; sequence MTHILFAVLVLALLALAFGIILGFAA. A 4Fe-4S domain is found at 32–90; it reads EADPIVDQLDALLPQTQCGQCGYPGCKPYAEALANGDQINKCVPGGDATMRKIADLMGV. Cysteine 49, cysteine 52, cysteine 57, cysteine 73, cysteine 115, cysteine 118, cysteine 121, cysteine 125, cysteine 145, cysteine 148, cysteine 151, and cysteine 155 together coordinate [4Fe-4S] cluster. 4Fe-4S ferredoxin-type domains follow at residues 106–135 and 136–165; these read KVAF…GATK and AMHT…MIPV.

The protein belongs to the 4Fe4S bacterial-type ferredoxin family. RnfB subfamily. The complex is composed of six subunits: RnfA, RnfB, RnfC, RnfD, RnfE and RnfG. It depends on [4Fe-4S] cluster as a cofactor.

The protein localises to the cell inner membrane. Its function is as follows. Part of a membrane-bound complex that couples electron transfer with translocation of ions across the membrane. This Aeromonas salmonicida (strain A449) protein is Ion-translocating oxidoreductase complex subunit B.